The primary structure comprises 344 residues: Cell adhesion molecule CEACAM6 (344 aa).

Residues 1 to 34 form the signal peptide; sequence MGPPSAPPCRLHVPWKEVLLTASLLTFWNPPTTA. Positions 35-142 constitute an Ig-like V-type domain; sequence KLTIESTPFN…EATGQFHVYP (108 aa). 12 N-linked (GlcNAc...) asparagine glycosylation sites follow: Asn104, Asn111, Asn115, Asn152, Asn173, Asn197, Asn224, Asn256, Asn274, Asn288, Asn292, and Asn309. Ig-like C2-type domains follow at residues 145–232 and 240–314; these read PKPS…VTLN and PTIS…TTVT. Cys167 and Cys215 are oxidised to a cystine. Cysteines 259 and 299 form a disulfide. Gly320 is lipidated: GPI-anchor amidated glycine. Positions 321–344 are cleaved as a propeptide — removed in mature form; that stretch reads SAPVLSAVATVGITIGVLARVALI.

Belongs to the immunoglobulin superfamily. CEA family. As to quaternary structure, homodimer; homodimerizes via its Ig-like V-type domain. Heterodimer with CEACAM8; heterodimerizes via its Ig-like V-type domain. Post-translationally, glycosylated. As to expression, expressed in neutrophils. Expressed in columnar epithelial and goblet cells of the colon. Expressed in numerous tumor cell lines (at protein level).

It localises to the cell membrane. The protein resides in the apical cell membrane. The protein localises to the cell surface. Its function is as follows. Cell surface glycoprotein that plays a role in cell adhesion and tumor progression. Intercellular adhesion occurs in a calcium- and fibronectin-independent manner. Mediates homophilic and heterophilic cell adhesion with other carcinoembryonic antigen-related cell adhesion molecules, such as CEACAM5 and CEACAM8. Heterophilic interaction with CEACAM8 occurs in activated neutrophils. Plays a role in neutrophil adhesion to cytokine-activated endothelial cells. Plays a role in cell migration and cell adhesion to endothelial cells. The polypeptide is Cell adhesion molecule CEACAM6 (Homo sapiens (Human)).